A 347-amino-acid polypeptide reads, in one-letter code: Putative [LysW]-L-2-aminoadipate/[LysW]-L-glutamate phosphate reductase (347 aa).

9-12 (SGYI) is an NADP(+) binding site. Residue Cys-149 is part of the active site. Asn-314 contacts NADP(+).

It belongs to the NAGSA dehydrogenase family. Type 1 subfamily. LysY sub-subfamily.

It localises to the cytoplasm. It catalyses the reaction [amino-group carrier protein]-C-terminal-N-(1-carboxy-5-oxopentan-1-yl)-L-glutamine + phosphate + NADP(+) = [amino-group carrier protein]-C-terminal-N-(1-carboxy-5-phosphooxy-5-oxopentan-1-yl)-L-glutamine + NADPH + H(+). It carries out the reaction [amino-group carrier protein]-C-terminal-gamma-(L-glutamyl-5-semialdehyde)-L-glutamate + phosphate + NADP(+) = [amino-group carrier protein]-C-terminal-gamma-(5-phospho-L-glutamyl)-L-glutamate + NADPH + H(+). Its pathway is amino-acid biosynthesis; L-lysine biosynthesis via AAA pathway; L-lysine from L-alpha-aminoadipate (Thermus route): step 3/5. It participates in amino-acid biosynthesis; L-arginine biosynthesis. Functionally, involved in both the arginine and lysine biosynthetic pathways. In Picrophilus torridus (strain ATCC 700027 / DSM 9790 / JCM 10055 / NBRC 100828 / KAW 2/3), this protein is Putative [LysW]-L-2-aminoadipate/[LysW]-L-glutamate phosphate reductase.